The chain runs to 34 residues: Non-cysteinic peptide Bs 10 (34 aa).

The tract at residues 1–34 (VTMGYIKDGDGKKIAKKKNKNGRKHVEIDLNKVG) is disordered. Positions 14–23 (IAKKKNKNGR) are enriched in basic residues. Positions 24 to 34 (KHVEIDLNKVG) are enriched in basic and acidic residues.

As to expression, expressed by the venom gland.

The protein resides in the secreted. This is Non-cysteinic peptide Bs 10 from Hottentotta tamulus sindicus (Scorpion).